The primary structure comprises 378 residues: MTRSGGPRVSTPGRLFIGLMSGTSLDGADGVLVRLAAGQAPQVLATAGLPMPDALRAELLALNRSGADELHRAALAAQALARVYADAVQALLQQARQPATAVTAIGVHGQTVRHRPELGYTLQLNAPALLAELTGIDVVADFRSRDVAAGGQGAPLVPPFHAAMFAAPHERAVLNLGGIANLTLLVPGQPPRGFDTGPANVLLDTWCRRHTGQPYDDNGRWAATGQVQAALLEHLLADEPWLALPPPKSTGRDLFDAAWLDQRLQSYDGPAPAPQDVQATLQRFTARTVADALEAAAPATRDVLVCGGGARNQGLKAELAMCLQRPVQATDAAGVPAQWVEAMAFAWLAQAFLDRTPAGVPQVTGARGPRVLGALYPA.

22–29 (GTSLDGAD) is a binding site for ATP.

It belongs to the anhydro-N-acetylmuramic acid kinase family.

The enzyme catalyses 1,6-anhydro-N-acetyl-beta-muramate + ATP + H2O = N-acetyl-D-muramate 6-phosphate + ADP + H(+). It participates in amino-sugar metabolism; 1,6-anhydro-N-acetylmuramate degradation. Its pathway is cell wall biogenesis; peptidoglycan recycling. In terms of biological role, catalyzes the specific phosphorylation of 1,6-anhydro-N-acetylmuramic acid (anhMurNAc) with the simultaneous cleavage of the 1,6-anhydro ring, generating MurNAc-6-P. Is required for the utilization of anhMurNAc either imported from the medium or derived from its own cell wall murein, and thus plays a role in cell wall recycling. The protein is Anhydro-N-acetylmuramic acid kinase of Bordetella petrii (strain ATCC BAA-461 / DSM 12804 / CCUG 43448).